The sequence spans 93 residues: UPF0223 protein str0998 (93 aa).

The protein belongs to the UPF0223 family.

The sequence is that of UPF0223 protein str0998 from Streptococcus thermophilus (strain CNRZ 1066).